Here is a 340-residue protein sequence, read N- to C-terminus: Sideroflexin-5 (340 aa).

4 helical membrane-spanning segments follow: residues 103-123 (IFMPFRMSGYIPFGTPIVVGL), 163-183 (FIQGYLGAVISAVSIAVGLNV), 254-274 (LTRVVLPMPILVLPPIVMSML), and 287-307 (LLPVQSLVCLAAFGLALPLAI).

This sequence belongs to the sideroflexin family. In terms of tissue distribution, primarily expressed in the brain.

It is found in the mitochondrion inner membrane. It carries out the reaction citrate(in) = citrate(out). Mitochondrial amino-acid transporter. Transports citrate. Does not act as a serine transporter: not able to mediate transport of serine into mitochondria. In brown adipose tissue, plays a role in the regulation of UCP1-dependent thermogenesis probably by supporting mitochondrial glycerol-3-phosphate utilization. The polypeptide is Sideroflexin-5 (Homo sapiens (Human)).